A 518-amino-acid chain; its full sequence is Zinc finger protein 449 (518 aa).

The SCAN box domain occupies 30–112 (RQRFRQFQYR…SLIEDLQREL (83 aa)). Residues 292–304 (NPTLGETPENSNL) show a composition bias toward polar residues. A disordered region spans residues 292 to 325 (NPTLGETPENSNLEEPLNPKPHKKKSPGEKPHRC). 7 C2H2-type zinc fingers span residues 323–345 (HRCP…QRIH), 351–373 (HKCP…QRLH), 379–401 (YECT…QRTH), 407–429 (YKCL…LKTH), 435–457 (HRCH…QRTH), 463–485 (FKCN…LRIH), and 491–513 (YKCT…QVTH).

It belongs to the krueppel C2H2-type zinc-finger protein family.

It localises to the nucleus. In terms of biological role, may be involved in transcriptional regulation. This is Zinc finger protein 449 (ZNF449) from Homo sapiens (Human).